The sequence spans 515 residues: Membrane-bound lytic murein transglycosylase F (515 aa).

The first 32 residues, 1-32 (MKKLKINYLFIGILTLLLAAALWPSIPWFGKA), serve as a signal peptide directing secretion. Residues 33-269 (DNRIAAIQSR…RMEEKYLGHG (237 aa)) form a non-LT domain region. Residues 270-515 (DDFDYVDTRT…PFSLKKKDEN (246 aa)) are LT domain. Residue glutamate 314 is part of the active site. The segment at 493-515 (QPSSNYLSHSPSLPFSLKKKDEN) is disordered.

It in the N-terminal section; belongs to the bacterial solute-binding protein 3 family. The protein in the C-terminal section; belongs to the transglycosylase Slt family.

It is found in the cell outer membrane. It carries out the reaction Exolytic cleavage of the (1-&gt;4)-beta-glycosidic linkage between N-acetylmuramic acid (MurNAc) and N-acetylglucosamine (GlcNAc) residues in peptidoglycan, from either the reducing or the non-reducing ends of the peptidoglycan chains, with concomitant formation of a 1,6-anhydrobond in the MurNAc residue.. Murein-degrading enzyme that degrades murein glycan strands and insoluble, high-molecular weight murein sacculi, with the concomitant formation of a 1,6-anhydromuramoyl product. Lytic transglycosylases (LTs) play an integral role in the metabolism of the peptidoglycan (PG) sacculus. Their lytic action creates space within the PG sacculus to allow for its expansion as well as for the insertion of various structures such as secretion systems and flagella. This Citrobacter koseri (strain ATCC BAA-895 / CDC 4225-83 / SGSC4696) protein is Membrane-bound lytic murein transglycosylase F.